The following is a 293-amino-acid chain: Prohibitin-2 (293 aa).

The helical; Signal-anchor for type II membrane protein transmembrane segment at 21–41 threads the bilayer; that stretch reads FGGGFGLLALGGVGLLALSSL. Residues 190 to 235 adopt a coiled-coil conformation; sequence GREYAAAIEAKQVAQQEAERARFLVEKALQDKRSIIVKAEGEAQSA.

The protein belongs to the prohibitin family. The mitochondrial prohibitin complex consists of two subunits (PHB1 and PHB2), assembled into a membrane-associated ring-shaped supercomplex of approximately 1 mDa.

The protein localises to the mitochondrion inner membrane. It localises to the cytoplasm. Its subcellular location is the nucleus. It is found in the cell membrane. Functionally, protein with pleiotropic attributes mediated in a cell-compartment- and tissue-specific manner, which include the plasma membrane-associated cell signaling functions, mitochondrial chaperone, and transcriptional co-regulator of transcription factors and sex steroid hormones in the nucleus. In the mitochondria, together with PHB, forms large ring complexes (prohibitin complexes) in the inner mitochondrial membrane (IMM) and functions as a chaperone protein that stabilizes mitochondrial respiratory enzymes and maintains mitochondrial integrity in the IMM, which is required for mitochondrial morphogenesis, neuronal survival, and normal lifespan. Its function is as follows. In the nucleus, serves as transcriptional co-regulator. This chain is Prohibitin-2 (phbB), found in Dictyostelium discoideum (Social amoeba).